We begin with the raw amino-acid sequence, 450 residues long: 23S rRNA (uracil(1939)-C(5))-methyltransferase RlmD (450 aa).

Residues Cys-81, Cys-87, Cys-90, and Cys-173 each contribute to the [4Fe-4S] cluster site. 6 residues coordinate S-adenosyl-L-methionine: Gln-276, Phe-305, Asn-310, Glu-326, Asp-353, and Asp-372. Cys-402 functions as the Nucleophile in the catalytic mechanism.

Belongs to the class I-like SAM-binding methyltransferase superfamily. RNA M5U methyltransferase family. RlmD subfamily.

The enzyme catalyses uridine(1939) in 23S rRNA + S-adenosyl-L-methionine = 5-methyluridine(1939) in 23S rRNA + S-adenosyl-L-homocysteine + H(+). Functionally, catalyzes the formation of 5-methyl-uridine at position 1939 (m5U1939) in 23S rRNA. This Idiomarina loihiensis (strain ATCC BAA-735 / DSM 15497 / L2-TR) protein is 23S rRNA (uracil(1939)-C(5))-methyltransferase RlmD.